The primary structure comprises 556 residues: Formate--tetrahydrofolate ligase 1 (556 aa).

ATP is bound at residue 65-72 (TPAGEGKS).

The protein belongs to the formate--tetrahydrofolate ligase family.

It carries out the reaction (6S)-5,6,7,8-tetrahydrofolate + formate + ATP = (6R)-10-formyltetrahydrofolate + ADP + phosphate. The protein operates within one-carbon metabolism; tetrahydrofolate interconversion. The polypeptide is Formate--tetrahydrofolate ligase 1 (Streptococcus pyogenes serotype M28 (strain MGAS6180)).